A 205-amino-acid polypeptide reads, in one-letter code: DNA-directed RNA polymerase RPB5 homolog (205 aa).

This sequence belongs to the archaeal RpoH/eukaryotic RPB5 RNA polymerase subunit family. In terms of assembly, part of the viral DNA-directed RNA polymerase that consists of 8 polII-like subunits (RPB1, RPB2, RPB3, RPB5, RPB6, RPB7, RPB9, RPB10), a capping enzyme and a termination factor.

The protein localises to the host cytoplasm. Its subcellular location is the virion. In terms of biological role, component of the DNA-directed RNA polymerase (RNAP) that catalyzes the transcription in the cytoplasm of viral DNA into RNA using the four ribonucleoside triphosphates as substrates. The sequence is that of DNA-directed RNA polymerase RPB5 homolog from Ornithodoros (relapsing fever ticks).